A 202-amino-acid polypeptide reads, in one-letter code: Large ribosomal subunit protein bL25 (202 aa).

The protein belongs to the bacterial ribosomal protein bL25 family. CTC subfamily. Part of the 50S ribosomal subunit; part of the 5S rRNA/L5/L18/L25 subcomplex. Contacts the 5S rRNA. Binds to the 5S rRNA independently of L5 and L18.

Functionally, this is one of the proteins that binds to the 5S RNA in the ribosome where it forms part of the central protuberance. This is Large ribosomal subunit protein bL25 from Burkholderia ambifaria (strain MC40-6).